The following is a 245-amino-acid chain: Uroporphyrinogen-III C-methyltransferase (245 aa).

S-adenosyl-L-homocysteine is bound by residues proline 12, 87-89, 117-118, methionine 168, alanine 197, and alanine 225; these read GGD and TA.

This sequence belongs to the precorrin methyltransferase family.

The catalysed reaction is uroporphyrinogen III + 2 S-adenosyl-L-methionine = precorrin-2 + 2 S-adenosyl-L-homocysteine + H(+). The protein operates within cofactor biosynthesis; adenosylcobalamin biosynthesis; precorrin-2 from uroporphyrinogen III: step 1/1. It participates in porphyrin-containing compound metabolism; siroheme biosynthesis; precorrin-2 from uroporphyrinogen III: step 1/1. Catalyzes the two successive C-2 and C-7 methylation reactions involved in the conversion of uroporphyrinogen III to precorrin-2 via the intermediate formation of precorrin-1. It is a step in the biosynthesis of both cobalamin (vitamin B12) and siroheme. The sequence is that of Uroporphyrinogen-III C-methyltransferase (cobA) from Pseudomonas aeruginosa (strain ATCC 15692 / DSM 22644 / CIP 104116 / JCM 14847 / LMG 12228 / 1C / PRS 101 / PAO1).